Consider the following 425-residue polypeptide: Serine hydroxymethyltransferase 2 (425 aa).

(6S)-5,6,7,8-tetrahydrofolate-binding positions include leucine 121 and 125–127 (GHL). Lysine 230 is modified (N6-(pyridoxal phosphate)lysine).

Belongs to the SHMT family. As to quaternary structure, homodimer. Pyridoxal 5'-phosphate serves as cofactor.

Its subcellular location is the cytoplasm. It carries out the reaction (6R)-5,10-methylene-5,6,7,8-tetrahydrofolate + glycine + H2O = (6S)-5,6,7,8-tetrahydrofolate + L-serine. Its pathway is one-carbon metabolism; tetrahydrofolate interconversion. It participates in amino-acid biosynthesis; glycine biosynthesis; glycine from L-serine: step 1/1. In terms of biological role, catalyzes the reversible interconversion of serine and glycine with tetrahydrofolate (THF) serving as the one-carbon carrier. This reaction serves as the major source of one-carbon groups required for the biosynthesis of purines, thymidylate, methionine, and other important biomolecules. Also exhibits THF-independent aldolase activity toward beta-hydroxyamino acids, producing glycine and aldehydes, via a retro-aldol mechanism. In Mycobacterium tuberculosis (strain CDC 1551 / Oshkosh), this protein is Serine hydroxymethyltransferase 2.